The chain runs to 333 residues: Protein amalgam (333 aa).

The N-terminal stretch at 1 to 23 (MARLRLLIGLIFCLAISLDSVLS) is a signal peptide. Residues 25–128 (PVISQISKDV…VLVSATEKVT (104 aa)) enclose the Ig-like V-type domain. N-linked (GlcNAc...) asparagine glycans are attached at residues N45 and N86. Cystine bridges form between C46/C117, C161/C208, and C251/C307. 2 Ig-like C2-type domains span residues 139-223 (PVIA…RLIR) and 230-323 (PQIA…LHLF). A glycan (N-linked (GlcNAc...) asparagine) is linked at N308.

Its subcellular location is the cell membrane. The chain is Protein amalgam (Ama) from Drosophila melanogaster (Fruit fly).